Here is a 419-residue protein sequence, read N- to C-terminus: Probable serine/threonine-protein kinase DDB_G0290859 (419 aa).

The 348-residue stretch at 40–387 (YDIISTIGSG…ASTIKKHPFF (348 aa)) folds into the Protein kinase domain. ATP-binding positions include 46–54 (IGSGSYGEV) and Lys-69. Residue Asp-173 is the Proton acceptor of the active site. Residues 388–419 (EGINWEEMANFNVEPPFKPTLSSDDDISYFTN) enclose the AGC-kinase C-terminal domain.

It belongs to the protein kinase superfamily. AGC Ser/Thr protein kinase family.

The catalysed reaction is L-seryl-[protein] + ATP = O-phospho-L-seryl-[protein] + ADP + H(+). It carries out the reaction L-threonyl-[protein] + ATP = O-phospho-L-threonyl-[protein] + ADP + H(+). The sequence is that of Probable serine/threonine-protein kinase DDB_G0290859 from Dictyostelium discoideum (Social amoeba).